The sequence spans 460 residues: Centrosomal protein CEP57L1 (460 aa).

Ser-49 is subject to Phosphoserine. 2 coiled-coil regions span residues 51 to 228 and 317 to 384; these read NSQA…EISK and ISIC…LKKH. Polar residues predominate over residues 399-410; sequence KMSEASGIQQED. A disordered region spans residues 399–423; that stretch reads KMSEASGIQQEDSYPKGSKNIKNSP.

This sequence belongs to the translokin family.

It is found in the cytoplasm. Its subcellular location is the cytoskeleton. It localises to the microtubule organizing center. The protein resides in the centrosome. Centrosomal protein which may be required for microtubule attachment to centrosomes. This Homo sapiens (Human) protein is Centrosomal protein CEP57L1 (CEP57L1).